The chain runs to 460 residues: MLLSFYFNGLLLVGCLLSWGRSDTEGQCHTFTDLNIHNAIIGTGLKVQLLLYTRENPNCAQDLNEDNSTGFQYLNVTRKTVFIIHGYRPTGSPPVWIDDIVKKFLDIQDFNVIVVDWNRGATTVLYHNAAANTRKVADILKRLIDNMLSQGATLDSVYMVGVSLGAHISGFVGKMYNGSIGRITGLDPAGPLFNGKPPEERLHYTDAQFVDVVHTDIDGLGYKESLGHIDFYPNGGTDQPGCPKTILAGSEYFKCDHQRSVYLYISSLKKNCDLVGFPCKSYRDYRIGNCTDCKEFLPLSCPVLGFYADKWKDHLVEKNPPGTKAFFDTAAKDPFCKFHYYLDFMTWSSQTKRGYITIKLKSLDGNVTESKLDKDHATFQQYKETSLLAKFDQDLDQISKISVTFTTGSIIGPKYKLRVLRMRLRPLTNRDRPILCRYDFVLLENIEMEFIPIPCEDTNL.

Positions 1–26 (MLLSFYFNGLLLVGCLLSWGRSDTEG) are cleaved as a signal peptide. N-linked (GlcNAc...) asparagine glycans are attached at residues Asn67 and Asn75. The Nucleophile role is filled by Ser163. Asn177 is a glycosylation site (N-linked (GlcNAc...) asparagine). Asp187 functions as the Charge relay system in the catalytic mechanism. Residues Cys242 and Cys255 are joined by a disulfide bond. His257 serves as the catalytic Charge relay system. Disulfide bonds link Cys279-Cys290 and Cys293-Cys301. An N-linked (GlcNAc...) asparagine glycan is attached at Asn289. Asn366 carries an N-linked (GlcNAc...) asparagine glycan. Cys436 and Cys455 are joined by a disulfide.

This sequence belongs to the AB hydrolase superfamily. Lipase family.

The protein resides in the secreted. It is found in the cell membrane. It carries out the reaction 1-hexadecanoyl-2-(9Z-octadecenoyl)-sn-glycero-3-phosphate + H2O = 2-(9Z-octadecenoyl)-sn-glycero-3-phosphate + hexadecanoate + H(+). In terms of biological role, hydrolyzes specifically phosphatidic acid (PA) to produce 2-acyl lysophosphatidic acid (LPA; a potent bioactive lipid mediator) and fatty acid. Does not hydrolyze other phospholipids, like phosphatidylserine (PS), phosphatidylcholine (PC) and phosphatidylethanolamine (PE) or triacylglycerol (TG). In Xenopus laevis (African clawed frog), this protein is Lipase member H-A (liph-a).